The sequence spans 1549 residues: FERM and PDZ domain-containing protein 1 (1549 aa).

A PDZ domain is found at 57 to 135 (TVTLDKDVLL…ALSITVVRCT (79 aa)). In terms of domain architecture, FERM spans 181 to 496 (NVLKVYLENG…GYYRLFVDPA (316 aa)). Disordered regions lie at residues 554 to 618 (AREE…DDLD), 717 to 738 (SHLS…PPQW), 775 to 834 (YDAA…YAKS), 913 to 1046 (STNP…RSEI), 1097 to 1174 (SLDS…EAQE), 1231 to 1257 (LSPC…DDSP), and 1321 to 1347 (PETE…AGSQ). Over residues 717–730 (SHLSDSGSESTASR) the composition is skewed to polar residues. The tract at residues 924-931 (EPETMETK) is important for interaction with GPSM2. Residues 950–961 (PSNTENPVTTDG) show a composition bias toward polar residues. Low complexity predominate over residues 962-980 (SSASIPHSPHHSNPGSSSP). Positions 1117-1130 (SGKDLGDSKGDRLD) are enriched in basic and acidic residues.

Interacts with GPSM1. Interacts with GPSM2.

It is found in the cytoplasm. The protein localises to the cytosol. Its subcellular location is the cell membrane. Its function is as follows. Stabilizes membrane-bound GPSM1, and thereby promotes its interaction with GNAI1. This chain is FERM and PDZ domain-containing protein 1 (Frmpd1), found in Mus musculus (Mouse).